The chain runs to 232 residues: Octanoyltransferase (232 aa).

Residues 32-219 (DTIYDTLILL…SFMVFNFSSC (188 aa)) enclose the BPL/LPL catalytic domain. Residues 77–84 (RGGDITYH), 140–142 (AIG), and 153–155 (GFA) each bind substrate. Catalysis depends on Cys-171, which acts as the Acyl-thioester intermediate.

It belongs to the LipB family.

The protein resides in the cytoplasm. The enzyme catalyses octanoyl-[ACP] + L-lysyl-[protein] = N(6)-octanoyl-L-lysyl-[protein] + holo-[ACP] + H(+). It participates in protein modification; protein lipoylation via endogenous pathway; protein N(6)-(lipoyl)lysine from octanoyl-[acyl-carrier-protein]: step 1/2. Catalyzes the transfer of endogenously produced octanoic acid from octanoyl-acyl-carrier-protein onto the lipoyl domains of lipoate-dependent enzymes. Lipoyl-ACP can also act as a substrate although octanoyl-ACP is likely to be the physiological substrate. The sequence is that of Octanoyltransferase from Dictyoglomus thermophilum (strain ATCC 35947 / DSM 3960 / H-6-12).